A 497-amino-acid chain; its full sequence is MCVFQILIIVTTIKVAGTANINHIDVPAGHSATTTIPRYPPVVDGTLYTETWTWIPNHCNETATGYVCLESAHCFTDLILGVSCMRYADEIVLRTDKFIVDAGSIKQIESLSLNGVPNIFLSTKASNKLEILNASLQNAGIYIRYSRNGTRTAKLDVVVVGVLGQARDRLPQMSSPMISSHADIKLSLKNFKALVYHVGDTINVSTAVILGPSPEIFTLEFRVLFLRYNPTCKFVTIYEPCIFHPKEPECITTAEQSVCHFASNIDILQIAAARSENCSTGYRRCIYDTAIDESVQARLTFIEPGIPSFKMKDVQVDDAGLYVVVALYNGRPSAWTYIYLSTVETYLNVYENYHKPGFGYKSFLQNSSIVDENEASDWSSSSIKRRNNGTIIYDILLTSLSIGAIIIVIVGGVCIAILIRRRRRRRTRGLFDEYPKYMTLPGNDLGGMNVPYDNTCSGNQVEYYQEKSAKMKRMGSGYTAWLKNDMPKIRKRLDLYH.

The Virion surface portion of the chain corresponds to 1–398; that stretch reads MCVFQILIIV…GTIIYDILLT (398 aa). N-linked (GlcNAc...) asparagine; by host glycosylation is found at Asn-60, Asn-133, Asn-148, Asn-203, Asn-277, Asn-366, and Asn-388. Residues 399 to 419 traverse the membrane as a helical segment; the sequence is SLSIGAIIIVIVGGVCIAILI. The Intravirion portion of the chain corresponds to 420-497; it reads RRRRRRRTRG…KIRKRLDLYH (78 aa).

The protein belongs to the alphaherpesvirinae glycoprotein E family. As to quaternary structure, interacts with gI. Phosphorylated within the acidic cluster. Phosphorylation determines whether endocytosed viral gE traffics to the trans-Golgi network or recycles to the cell membrane.

Its subcellular location is the virion membrane. It localises to the host cell membrane. The protein resides in the host cell junction. The protein localises to the host Golgi apparatus membrane. It is found in the host endosome membrane. In epithelial cells, the heterodimer gE/gI is required for the cell-to-cell spread of the virus, by sorting nascent virions to cell junctions. Once the virus reaches the cell junctions, virus particles can spread to adjacent cells extremely rapidly through interactions with cellular receptors that accumulate at these junctions. Implicated in basolateral spread in polarized cells. In neuronal cells, gE/gI is essential for the anterograde spread of the infection throughout the host nervous system. Together with US9, the heterodimer gE/gI is involved in the sorting and transport of viral structural components toward axon tips. This chain is Envelope glycoprotein E (MDV096), found in Gallus gallus (Chicken).